A 162-amino-acid polypeptide reads, in one-letter code: Phosphopantetheine adenylyltransferase (162 aa).

Residue Thr10 participates in substrate binding. ATP contacts are provided by residues 10–11 (TF) and His18. Residues Lys42, Met74, and Arg88 each contribute to the substrate site. Residues 89–91 (GLR), Glu99, and 124–130 (YAFLSST) each bind ATP.

It belongs to the bacterial CoaD family. In terms of assembly, homohexamer. Mg(2+) is required as a cofactor.

The protein localises to the cytoplasm. The catalysed reaction is (R)-4'-phosphopantetheine + ATP + H(+) = 3'-dephospho-CoA + diphosphate. It participates in cofactor biosynthesis; coenzyme A biosynthesis; CoA from (R)-pantothenate: step 4/5. Functionally, reversibly transfers an adenylyl group from ATP to 4'-phosphopantetheine, yielding dephospho-CoA (dPCoA) and pyrophosphate. This chain is Phosphopantetheine adenylyltransferase, found in Aliivibrio salmonicida (strain LFI1238) (Vibrio salmonicida (strain LFI1238)).